A 918-amino-acid chain; its full sequence is Signal transduction histidine-protein kinase BarA (918 aa).

Residues 1–10 (MTNYSLRARM) lie on the Cytoplasmic side of the membrane. The chain crosses the membrane as a helical span at residues 11–31 (MILILAPTVLIGLLLSIFFVV). Residues 32–175 (HRYNDLQRQL…LKSVRLQQYK (144 aa)) lie on the Periplasmic side of the membrane. Residues 176–196 (EIFISCVMMLFCIGIALIFGW) traverse the membrane as a helical segment. Over 197 to 918 (RLMRDVTGPI…VAREASKILG (722 aa)) the chain is Cytoplasmic. One can recognise an HAMP domain in the interval 200–252 (RDVTGPIRNMVNTVDRIRRGQLDSRVEGFMLGELDMLKNGINSMAMSLAAYHE). Positions 299 to 520 (NMSHELRTPL…TFWFHINLDL (222 aa)) constitute a Histidine kinase domain. The residue at position 302 (His-302) is a Phosphohistidine; by autocatalysis. The Response regulatory domain maps to 669 to 785 (TVMAVDDNPA…RLHNLLLRYK (117 aa)). Residue Asp-718 is modified to 4-aspartylphosphate. The HPt domain occupies 822–918 (KTDLARDMLQ…VAREASKILG (97 aa)). The residue at position 861 (His-861) is a Phosphohistidine.

In terms of processing, activation requires a sequential transfer of a phosphate group from a His in the primary transmitter domain, to an Asp in the receiver domain and to a His in the secondary transmitter domain.

It is found in the cell inner membrane. It catalyses the reaction ATP + protein L-histidine = ADP + protein N-phospho-L-histidine.. In terms of biological role, member of the two-component regulatory system UvrY/BarA involved in the regulation of carbon metabolism via the CsrA/CsrB regulatory system. Phosphorylates UvrY, probably via a four-step phosphorelay. The chain is Signal transduction histidine-protein kinase BarA (barA) from Shigella flexneri.